The primary structure comprises 147 residues: Hemoglobin subunit beta-H0 (147 aa).

Positions 3-147 (HFTAEEKAAI…VATALSHKYH (145 aa)) constitute a Globin domain. Residues H64 and H93 each contribute to the heme b site.

This sequence belongs to the globin family. In terms of assembly, heterotetramer of two alpha chains and two beta chains. As to expression, red blood cells.

Functionally, this is a minor early embryonic beta chain. The sequence is that of Hemoglobin subunit beta-H0 (Hbb-bh0) from Mus musculus (Mouse).